A 393-amino-acid polypeptide reads, in one-letter code: S-adenosylmethionine synthase 2 (393 aa).

A Mg(2+)-binding site is contributed by Glu9. His15 serves as a coordination point for ATP. Glu43 contributes to the K(+) binding site. Residues Glu56 and Gln99 each coordinate L-methionine. Residues 167-169, 235-238, Asp246, 252-253, Ala269, Lys273, and Lys277 each bind ATP; these read DGK, SGRF, and RK. Asp246 is an L-methionine binding site. Lys277 lines the L-methionine pocket.

This sequence belongs to the AdoMet synthase family. In terms of assembly, homotetramer. Requires Mn(2+) as cofactor. Mg(2+) serves as cofactor. It depends on Co(2+) as a cofactor. K(+) is required as a cofactor. Roots and shoots.

It is found in the cytoplasm. It catalyses the reaction L-methionine + ATP + H2O = S-adenosyl-L-methionine + phosphate + diphosphate. Its pathway is amino-acid biosynthesis; S-adenosyl-L-methionine biosynthesis; S-adenosyl-L-methionine from L-methionine: step 1/1. Functionally, catalyzes the formation of S-adenosylmethionine from methionine and ATP. The reaction comprises two steps that are both catalyzed by the same enzyme: formation of S-adenosylmethionine (AdoMet) and triphosphate, and subsequent hydrolysis of the triphosphate. The chain is S-adenosylmethionine synthase 2 (SAMS2) from Pinus contorta (Shore pine).